The primary structure comprises 360 residues: Phenylalanine--tRNA ligase alpha subunit (360 aa).

Position 260 (glutamate 260) interacts with Mg(2+).

It belongs to the class-II aminoacyl-tRNA synthetase family. Phe-tRNA synthetase alpha subunit type 1 subfamily. Tetramer of two alpha and two beta subunits. The cofactor is Mg(2+).

Its subcellular location is the cytoplasm. It catalyses the reaction tRNA(Phe) + L-phenylalanine + ATP = L-phenylalanyl-tRNA(Phe) + AMP + diphosphate + H(+). This chain is Phenylalanine--tRNA ligase alpha subunit, found in Rhizobium johnstonii (strain DSM 114642 / LMG 32736 / 3841) (Rhizobium leguminosarum bv. viciae).